The primary structure comprises 495 residues: Homeobox protein ceh-21 (495 aa).

Polar residues predominate over residues 1–14; that stretch reads MSQQFQASSGTGSA. 2 disordered regions span residues 1 to 24 and 89 to 267; these read MSQQ…TEHE and TAES…PGGE. Basic and acidic residues predominate over residues 106 to 120; the sequence is LEEKSDKSSDGDGTS. Acidic residues predominate over residues 132-145; it reads NETEEDHEEKEDEA. A compositionally biased stretch (basic and acidic residues) spans 149-162; it reads SRRESTRLKRKLLE. Polar residues-rich tracts occupy residues 163-179 and 199-217; these read SQKT…ASSK and TPEQ…TVRA. A compositionally biased stretch (low complexity) spans 218–233; the sequence is SSTCGSSVSSTSTVSS. Residues 242 to 254 show a composition bias toward basic and acidic residues; sequence RATETPKLEELAP. The segment at residues 284-370 is a DNA-binding region (CUT); sequence NAQIGDDEEL…VRRALCFLPK (87 aa). The homeobox DNA-binding region spans 389–449; the sequence is KTVKVIRLTF…MNSRRRLRID (61 aa). Positions 450-473 are disordered; it reads QQISRSSRSTGNGADTEDELDEED. Positions 464-473 are enriched in acidic residues; that stretch reads DTEDELDEED.

Belongs to the CUT homeobox family.

Its subcellular location is the nucleus. In terms of biological role, probable DNA-binding regulatory protein involved in cell-fate specification. The chain is Homeobox protein ceh-21 (ceh-21) from Caenorhabditis elegans.